A 429-amino-acid chain; its full sequence is UPF0597 protein BT_2080 (429 aa).

It belongs to the UPF0597 family.

The sequence is that of UPF0597 protein BT_2080 from Bacteroides thetaiotaomicron (strain ATCC 29148 / DSM 2079 / JCM 5827 / CCUG 10774 / NCTC 10582 / VPI-5482 / E50).